The following is a 967-amino-acid chain: RNA polymerase II C-terminal domain phosphatase-like 1 (967 aa).

A Nuclear localization signal (NLS) motif is present at residues 38-41 (RKKK). Residues 151 to 401 (LNLRCLGIVF…TPVLCVARNV (251 aa)) form the FCP1 homology domain. Disordered regions lie at residues 548-611 (SEPS…VQSR) and 643-712 (MEKH…RNSD). Residues 590 to 603 (PSEPSFPQRPPVQA) show a composition bias toward pro residues. A compositionally biased stretch (basic and acidic residues) spans 665-684 (RMLHENRRPPKESLRRDEQL). DRBM domains are found at residues 724–792 (TETS…NLAD) and 855–925 (GSIT…SVRS). The segment at 928–967 (GQPLHKRQGSPRSFGGMSNKRLKPDFQRSLQRMPSSGRYS) is disordered. Residues 945–967 (SNKRLKPDFQRSLQRMPSSGRYS) are required for nuclear localization (NLS). A Nuclear localization signal (NLS) motif is present at residues 947–951 (KRLKP). Over residues 955 to 967 (RSLQRMPSSGRYS) the composition is skewed to polar residues.

As to quaternary structure, interacts with FREE1, ANAC019, MYB3, MYB4 and MYB32. Binds to DMS3. Interacts with RCF3. Interacts with RS40 and RS41. Interacts with EIF4A3. Interacts with UPF3. The cofactor is Mg(2+). It depends on Co(2+) as a cofactor. Mn(2+) serves as cofactor. Expressed at very low levels in roots, leaves, stems, flowers and siliques.

It localises to the nucleus. The protein resides in the nucleus speckle. It carries out the reaction O-phospho-L-seryl-[protein] + H2O = L-seryl-[protein] + phosphate. It catalyses the reaction O-phospho-L-threonyl-[protein] + H2O = L-threonyl-[protein] + phosphate. In terms of biological role, processively dephosphorylates 'Ser-5' but not 'Ser-2' of the heptad repeats YSPTSPS in the C-terminal domain of the largest RNA polymerase II subunit (RPB1). This promotes the activity of RNA polymerase II. Together with CPL2, required for male gametes fertility. Multifunctional regulator that modulates plant growth, stress, and phytohormones responses. Negative regulator of stress gene transcription involved in abscisic acid (ABA) mediated and jasmonic acid (JA) mediated signaling pathways, NaCl, osmotic stress, wounding, and cold resistance. Negatively regulates the expression of jasmonic acid (JA) biosynthetic genes in response to wounding. Forms a complex with RCF3 that modulates co-transcriptional processes such as mRNA capping and polyadenylation, and functions to repress stress-inducible gene expression. Dephosphorylates RCF3. Involved in the dephosphorylation of EIF4A3. This dephosphorylation retains EIF4A3 in the nucleus and limits its accumulation in the cytoplasm. Is essential for the degradation of the nonsense-mediated mRNA decay (NMD) transcripts. This Arabidopsis thaliana (Mouse-ear cress) protein is RNA polymerase II C-terminal domain phosphatase-like 1.